A 333-amino-acid polypeptide reads, in one-letter code: Fe-S cluster assembly protein dre2 (333 aa).

The interval 1-29 is disordered; it reads MSPITLDLTSDFNPANTTGAGSSSSQPRT. The span at 7–28 shows a compositional bias: polar residues; it reads DLTSDFNPANTTGAGSSSSQPR. Residues 23–158 are N-terminal SAM-like domain; sequence SSSQPRTLLV…KPDYAEEEAV (136 aa). The interval 159-225 is linker; sequence PLRFGLKRKT…EDTLLTEADL (67 aa). 4 residues coordinate [2Fe-2S] cluster: cysteine 235, cysteine 246, cysteine 249, and cysteine 251. The fe-S binding site A stretch occupies residues 235–251; that stretch reads CQPKPGKKRRACKDCTC. The [4Fe-4S] cluster site is built by cysteine 296, cysteine 299, cysteine 307, and cysteine 310. 2 consecutive short sequence motifs (cx2C motif) follow at residues 296–299 and 307–310; these read CGSC and CAGC. The segment at 296 to 310 is fe-S binding site B; that stretch reads CGSCALGDAFRCAGC.

It belongs to the anamorsin family. In terms of assembly, monomer. Interacts with tah18. Interacts with mia40. [2Fe-2S] cluster is required as a cofactor. The cofactor is [4Fe-4S] cluster.

It localises to the cytoplasm. The protein localises to the mitochondrion intermembrane space. Its function is as follows. Component of the cytosolic iron-sulfur (Fe-S) protein assembly (CIA) machinery required for the maturation of extramitochondrial Fe-S proteins. Part of an electron transfer chain functioning in an early step of cytosolic Fe-S biogenesis, facilitating the de novo assembly of a [4Fe-4S] cluster on the scaffold complex cfd1-nbp35. Electrons are transferred to dre2 from NADPH via the FAD- and FMN-containing protein tah18. Tah18-dre2 are also required for the assembly of the diferric tyrosyl radical cofactor of ribonucleotide reductase (RNR), probably by providing electrons for reduction during radical cofactor maturation in the catalytic small subunit rnr2. This chain is Fe-S cluster assembly protein dre2, found in Neurospora crassa (strain ATCC 24698 / 74-OR23-1A / CBS 708.71 / DSM 1257 / FGSC 987).